A 277-amino-acid chain; its full sequence is Thiamine thiazole synthase (277 aa).

NAD(+)-binding positions include Ser-36, Gly-63, Val-126, and 152-154; that span reads HVD. Fe cation contacts are provided by Asp-154 and His-169. Met-230 is an NAD(+) binding site. Glycine is bound at residue Arg-240.

Belongs to the THI4 family. As to quaternary structure, homooctamer; tetramer of dimers. Fe(2+) is required as a cofactor.

It carries out the reaction hydrogen sulfide + glycine + NAD(+) = ADP-5-ethyl-4-methylthiazole-2-carboxylate + nicotinamide + 3 H2O + H(+). The protein operates within cofactor biosynthesis; thiamine diphosphate biosynthesis. Functionally, involved in the biosynthesis of the thiazole moiety of thiamine. Catalyzes the conversion of NAD and glycine to adenosine diphosphate 5-(2-hydroxyethyl)-4-methylthiazole-2-carboxylate (ADT), an adenylated thiazole intermediate, using free sulfide as a source of sulfur. In Fervidobacterium nodosum (strain ATCC 35602 / DSM 5306 / Rt17-B1), this protein is Thiamine thiazole synthase.